We begin with the raw amino-acid sequence, 192 residues long: dCTP deaminase, dUMP-forming (192 aa).

Residues Lys101–Arg106, Asp119, Thr127–Glu129, Gln148, Tyr162, and Gln174 each bind dCTP. The active-site Proton donor/acceptor is Glu129. A disordered region spans residues Gly165–Leu184. The segment covering Tyr171 to His183 has biased composition (polar residues).

The protein belongs to the dCTP deaminase family. As to quaternary structure, homotrimer.

The catalysed reaction is dCTP + 2 H2O = dUMP + NH4(+) + diphosphate. It participates in pyrimidine metabolism; dUMP biosynthesis; dUMP from dCTP: step 1/1. Functionally, bifunctional enzyme that catalyzes both the deamination of dCTP to dUTP and the hydrolysis of dUTP to dUMP without releasing the toxic dUTP intermediate. This Kocuria rhizophila (strain ATCC 9341 / DSM 348 / NBRC 103217 / DC2201) protein is dCTP deaminase, dUMP-forming.